A 566-amino-acid polypeptide reads, in one-letter code: DNA ligase B (566 aa).

Lys125 serves as the catalytic N6-AMP-lysine intermediate.

This sequence belongs to the NAD-dependent DNA ligase family. LigB subfamily.

It carries out the reaction NAD(+) + (deoxyribonucleotide)n-3'-hydroxyl + 5'-phospho-(deoxyribonucleotide)m = (deoxyribonucleotide)n+m + AMP + beta-nicotinamide D-nucleotide.. Functionally, catalyzes the formation of phosphodiester linkages between 5'-phosphoryl and 3'-hydroxyl groups in double-stranded DNA using NAD as a coenzyme and as the energy source for the reaction. In Pseudomonas putida (strain GB-1), this protein is DNA ligase B.